A 44-amino-acid chain; its full sequence is DVCDSLVDGRCIHNGCFCEESKPNGNCCDSGGCVWWWCPGTKWD.

4 cysteine pairs are disulfide-bonded: Cys-3–Cys-16, Cys-11–Cys-28, Cys-18–Cys-33, and Cys-27–Cys-38. At Pro-23 the chain carries 4-hydroxyproline. Residues Trp-36 and Trp-37 each carry the 6'-bromotryptophan modification. Position 39 is a 4-hydroxyproline (Pro-39). Trp-43 is modified (6'-bromotryptophan).

In terms of tissue distribution, expressed by the venom duct.

The protein resides in the secreted. Functionally, mu-conotoxins block voltage-gated sodium channels. This toxin reversibly blocks voltage-gated sodium channel in cephalopods, with no alteration in the voltage dependence of sodium conductance or on the kinetics of inactivation. This is Mu-conotoxin-like Cal 12.1.3b from Californiconus californicus (California cone).